The chain runs to 593 residues: MSAPAAGATAGGDDAADRNVEMWKIKRLIKSLELARGNGTSMISLIIPPKDQVARIQRMLAEEYGTASNIKSRVNRLSVLGAITSVQGRLKLYNKVPPNGLVVYCGTIMTDEGKEKKVNIDFEPFKAINTSLYLCDNKFHTEALQGLLADDNKFGFIIMDGNGCLFGTLQGNTREVLHKFTVDLPKKHGRGGQSAVRFARLRNEKRHNYVRKVAENSVEQFIKNDKVTVAGLILAGSADFKTELGQSDMFDQRLQAKMIKTVDIAYGGENGFNQAIELAADTLASVKFIQEKKLIGGYFDEISQDTGKYVFGVKDTLAALEMGAIETLICWENLDIVRYKMKNSLGEDILLNLRPDEEKDKSHFTDSETGQDMEIIETMPLLEWFANNYKNFGAALEIVTDKSQEGAQFVRGFGGIGGLLRYRVDLAHVDLEDELDNIDLDDYSRAAVVSHWAPYSFLLLFKLVSSFFFINLFINYPALSNYNISLSQSSSSLIAISHTTLYSKFLFHFIEFAPRVPHYCRFVWSVDAFSSAGKASHVCQHTEKETFHARNEDAIGGLFNRTKVEARATHSHSMTSTLSLPSVDVSTRNSNDF.

Belongs to the eukaryotic release factor 1 family. As to quaternary structure, heterodimer of two subunits, one of which binds GTP.

The protein resides in the cytoplasm. In terms of biological role, directs the termination of nascent peptide synthesis (translation) in response to the termination codons UAA, UAG and UGA. This Caenorhabditis elegans protein is Eukaryotic peptide chain release factor subunit 1.